Consider the following 426-residue polypeptide: uncharacterized protein (426 aa).

The protein belongs to the serpin family.

This is an uncharacterized protein from Methanosarcina mazei (strain ATCC BAA-159 / DSM 3647 / Goe1 / Go1 / JCM 11833 / OCM 88) (Methanosarcina frisia).